A 65-amino-acid polypeptide reads, in one-letter code: Large ribosomal subunit protein bL35 (65 aa).

The protein belongs to the bacterial ribosomal protein bL35 family.

The polypeptide is Large ribosomal subunit protein bL35 (Enterobacter sp. (strain 638)).